Reading from the N-terminus, the 387-residue chain is Chaperone protein DnaJ (387 aa).

The J domain maps to 5 to 70; it reads DYYEILEVSA…QKRQAYDQFG (66 aa). The CR-type zinc finger occupies 130–208; it reads GTTVDVRIPT…CRGEGYKHSS (79 aa). C143, C146, C160, C163, C182, C185, C196, and C199 together coordinate Zn(2+). CXXCXGXG motif repeat units follow at residues 143–150, 160–167, 182–189, and 196–203; these read CESCDGSG, CPTCQGIG, CPNCHGTG, and CKTCRGEG.

Belongs to the DnaJ family. As to quaternary structure, homodimer. Zn(2+) is required as a cofactor.

Its subcellular location is the cytoplasm. Functionally, participates actively in the response to hyperosmotic and heat shock by preventing the aggregation of stress-denatured proteins and by disaggregating proteins, also in an autonomous, DnaK-independent fashion. Unfolded proteins bind initially to DnaJ; upon interaction with the DnaJ-bound protein, DnaK hydrolyzes its bound ATP, resulting in the formation of a stable complex. GrpE releases ADP from DnaK; ATP binding to DnaK triggers the release of the substrate protein, thus completing the reaction cycle. Several rounds of ATP-dependent interactions between DnaJ, DnaK and GrpE are required for fully efficient folding. Also involved, together with DnaK and GrpE, in the DNA replication of plasmids through activation of initiation proteins. The polypeptide is Chaperone protein DnaJ (Hydrogenovibrio crunogenus (strain DSM 25203 / XCL-2) (Thiomicrospira crunogena)).